Consider the following 1190-residue polypeptide: Phosphatidylinositol 3,4,5-trisphosphate 5-phosphatase 1 (1190 aa).

Positions Trp8–Val104 constitute an SH2 domain. Residues Ala111–Glu120 are compositionally biased toward acidic residues. Residues Ala111 to Pro130 form a disordered region. The SH3-binding 1 motif lies at Pro126–Arg131. Phosphoserine is present on Ser245. The NPXY motif 1 signature appears at Asn914–Tyr917. Position 917 is a phosphotyrosine (Tyr917). Ser934 carries the phosphoserine modification. Tyr944 is subject to Phosphotyrosine. Residues Gln946–Gln1190 are disordered. Pro residues predominate over residues Pro961–Ser971. Thr963 carries the post-translational modification Phosphothreonine. Phosphoserine occurs at positions 966 and 971. The SH3-binding 2 motif lies at Pro969–Lys974. Residues Gln989 to Lys998 show a composition bias toward basic and acidic residues. An interaction with DAB2 region spans residues Met1014 to Lys1028. The NPXY motif 2 motif lies at Asn1017–Tyr1020. At Tyr1020 the chain carries Phosphotyrosine. Positions Pro1031–Pro1045 are enriched in basic and acidic residues. Residues Pro1038–Pro1049 carry the SH3-binding 3 motif. The segment covering Ile1140–Val1149 has biased composition (pro residues). Residues Lys1161–Leu1183 show a composition bias toward basic and acidic residues.

It belongs to the inositol 1,4,5-trisphosphate 5-phosphatase family. In terms of assembly, interacts with tyrosine phosphorylated forms of SHC1. Interacts with tyrosine phosphorylated form of DOK1. Interacts with tyrosine phosphorylated form of DOK3. Interacts with tyrosine phosphorylated form of SLAMF1/CD150. Interacts with PTPN11/SHP-2 in response to IL-3. Interacts with receptor EPOR. Interacts with receptors MS4A2/FCER1B and FCER1G. Interacts with receptors FCGR2B and FCGR3. Interacts with receptor FCGR2A, leading to regulate gene expression during the phagocytic process. Interacts with GRB2. Interacts with PLCG1. Interacts with tyrosine kinases SRC and TEC. Interacts with c-Met/MET. Interacts with MILR1 (tyrosine-phosphorylated). Can weakly interact (via NPXY motif 2) with DAB2 (via PID domain); the interaction is impaired by tyrosine phosphorylation of the NPXY motif. Interacts (via SH2 domain) with tyrosine phosphorylated KLRC1 (via ITIM). Interacts with MPL/TPOR. Post-translationally, tyrosine phosphorylated by the members of the SRC family after exposure to a diverse array of extracellular stimuli such as cytokines, growth factors, antibodies, chemokines, integrin ligands and hypertonic and oxidative stress. Phosphorylated upon IgG receptor FCGR2B-binding.

Its subcellular location is the cytoplasm. The protein localises to the cell membrane. The protein resides in the membrane raft. It is found in the cytoskeleton. It carries out the reaction a 1,2-diacyl-sn-glycero-3-phospho-(1D-myo-inositol-3,4,5-trisphosphate) + H2O = a 1,2-diacyl-sn-glycero-3-phospho-(1D-myo-inositol-3,4-bisphosphate) + phosphate. The catalysed reaction is 1D-myo-inositol 1,3,4,5-tetrakisphosphate + H2O = 1D-myo-inositol 1,3,4-trisphosphate + phosphate. The enzyme catalyses a 1,2-diacyl-sn-glycero-3-phospho-(1D-myo-inositol-4,5-bisphosphate) + H2O = a 1,2-diacyl-sn-glycero-3-phospho-(1D-myo-inositol 4-phosphate) + phosphate. Its activity is regulated as follows. Activated upon translocation to the sites of synthesis of PtdIns(3,4,5)P3 in the membrane. Phosphatidylinositol (PtdIns) phosphatase that specifically hydrolyzes the 5-phosphate of phosphatidylinositol-3,4,5-trisphosphate (PtdIns(3,4,5)P3) to produce PtdIns(3,4)P2, thereby negatively regulating the PI3K (phosphoinositide 3-kinase) pathways. Also able to hydrolyze the 5-phosphate of phosphatidylinositol-4,5-bisphosphate (PtdIns(4,5)P3) and inositol 1,3,4,5-tetrakisphosphate. Acts as a negative regulator of B-cell antigen receptor signaling. Mediates signaling from the FC-gamma-RIIB receptor (FCGR2B), playing a central role in terminating signal transduction from activating immune/hematopoietic cell receptor systems. Acts as a negative regulator of myeloid cell proliferation/survival and chemotaxis, mast cell degranulation, immune cells homeostasis, integrin alpha-IIb/beta-3 signaling in platelets and JNK signaling in B-cells. Regulates proliferation of osteoclast precursors, macrophage programming, phagocytosis and activation and is required for endotoxin tolerance. Involved in the control of cell-cell junctions, CD32a signaling in neutrophils and modulation of EGF-induced phospholipase C activity. Key regulator of neutrophil migration, by governing the formation of the leading edge and polarization required for chemotaxis. Modulates FCGR3/CD16-mediated cytotoxicity in NK cells. Mediates the activin/TGF-beta-induced apoptosis through its Smad-dependent expression. This Rattus norvegicus (Rat) protein is Phosphatidylinositol 3,4,5-trisphosphate 5-phosphatase 1 (Inpp5d).